We begin with the raw amino-acid sequence, 285 residues long: Bifunctional protein FolD (285 aa).

NADP(+)-binding positions include 165 to 167 (GRS) and serine 190.

This sequence belongs to the tetrahydrofolate dehydrogenase/cyclohydrolase family. Homodimer.

The catalysed reaction is (6R)-5,10-methylene-5,6,7,8-tetrahydrofolate + NADP(+) = (6R)-5,10-methenyltetrahydrofolate + NADPH. It catalyses the reaction (6R)-5,10-methenyltetrahydrofolate + H2O = (6R)-10-formyltetrahydrofolate + H(+). It participates in one-carbon metabolism; tetrahydrofolate interconversion. Its function is as follows. Catalyzes the oxidation of 5,10-methylenetetrahydrofolate to 5,10-methenyltetrahydrofolate and then the hydrolysis of 5,10-methenyltetrahydrofolate to 10-formyltetrahydrofolate. In Streptococcus pneumoniae serotype 4 (strain ATCC BAA-334 / TIGR4), this protein is Bifunctional protein FolD.